Reading from the N-terminus, the 365-residue chain is 5-hydroxytryptamine receptor 1E (365 aa).

Over 1–21 (MNITNCTTEASMAIRPKTITE) the chain is Extracellular. 2 N-linked (GlcNAc...) asparagine glycosylation sites follow: Asn2 and Asn5. Residues 22-45 (KMLICMTLVVITTLTTLLNLAVIM) traverse the membrane as a helical segment. Over 46–59 (AIGTTKKLHQPANY) the chain is Cytoplasmic. Residues 60-84 (LICSLAVTDLLVAVLVMPLSIIYIV) traverse the membrane as a helical segment. The Extracellular portion of the chain corresponds to 85–92 (MDRWKLGY). Residues 93-118 (FLCEVWLSVDMTCCTCSILHLCVIAL) form a helical membrane-spanning segment. Cys95 and Cys173 are joined by a disulfide. Residues Asp102 and Cys106 each coordinate serotonin. The short motif at 119–121 (DRY) is the DRY motif; important for ligand-induced conformation changes element. At 119-138 (DRYWAITNAIEYARKRTAKR) the chain is on the cytoplasmic side. A helical transmembrane segment spans residues 139-157 (AALMILTVWTISIFISMPP). The Extracellular segment spans residues 158 to 179 (LFWRSHRRLSPPPSQCTIQHDH). The helical transmembrane segment at 180 to 203 (VIYTIYSTLGAFYIPLTLILILYY) threads the bilayer. Residues 204–291 (RIYHAAKSLY…SSTRERKAAR (88 aa)) lie on the Cytoplasmic side of the membrane. Residues 292–316 (ILGLILGAFILSWLPFFIKELIVGL) traverse the membrane as a helical segment. Residues 317-322 (SIYTVS) lie on the Extracellular side of the membrane. A helical transmembrane segment spans residues 323–345 (SEVADFLTWLGYVNSLINPLLYT). An NPxxY motif; important for ligand-induced conformation changes and signaling motif is present at residues 340-344 (NPLLY). The Cytoplasmic segment spans residues 346–365 (SFNEDFKLAFKKLIRCREHT).

Belongs to the G-protein coupled receptor 1 family. In terms of tissue distribution, detected in brain.

It localises to the cell membrane. G-protein coupled receptor for 5-hydroxytryptamine (serotonin). Also functions as a receptor for various alkaloids and psychoactive substances. Ligand binding causes a conformation change that triggers signaling via guanine nucleotide-binding proteins (G proteins) and modulates the activity of downstream effectors, such as adenylate cyclase. HTR1E is coupled to G(i)/G(o) G alpha proteins and mediates inhibitory neurotransmission by inhibiting adenylate cyclase activity. The chain is 5-hydroxytryptamine receptor 1E from Homo sapiens (Human).